Reading from the N-terminus, the 291-residue chain is tRNA dimethylallyltransferase (291 aa).

ATP is bound at residue 8–15 (GSTASGKT). A substrate-binding site is contributed by 10 to 15 (TASGKT). The tract at residues 33-36 (DSLC) is interaction with substrate tRNA.

The protein belongs to the IPP transferase family. As to quaternary structure, monomer. Requires Mg(2+) as cofactor.

It catalyses the reaction adenosine(37) in tRNA + dimethylallyl diphosphate = N(6)-dimethylallyladenosine(37) in tRNA + diphosphate. Functionally, catalyzes the transfer of a dimethylallyl group onto the adenine at position 37 in tRNAs that read codons beginning with uridine, leading to the formation of N6-(dimethylallyl)adenosine (i(6)A). The protein is tRNA dimethylallyltransferase of Aliarcobacter butzleri (strain RM4018) (Arcobacter butzleri).